The chain runs to 471 residues: Secretogranin-3 (471 aa).

The first 22 residues, 1–22 (MGFLWTGSWILVLVLNSGPIQA), serve as a signal peptide directing secretion. 4 disordered regions span residues 24–73 (PKPE…SNFS), 92–145 (KAKQ…HQLD), 208–231 (ANNY…KIPE), and 345–405 (KLEK…DEAK). Positions 28-45 (GSQDKSLHNRELSAERPL) are enriched in basic and acidic residues. The residue at position 40 (serine 40) is a Phosphoserine. Serine 40 is a glycosylation site (O-linked (Xyl...) (chondroitin sulfate) serine). Residues 62–73 (PSESKPSESNFS) show a composition bias toward low complexity. 4 stretches are compositionally biased toward basic and acidic residues: residues 106 to 142 (LNVD…DGLH), 214 to 231 (APEK…KIPE), 345 to 355 (KLEKNTTDSKS), and 363 to 405 (EKSH…DEAK). Residue serine 365 is modified to Phosphoserine.

Interacts with CHGA. Interacts with secretogranin II/SCG2. Interacts (via C-terminus) with CPE. In terms of tissue distribution, expression restricted to the brain and pituitary gland. Not detected in the adrenal gland.

Its subcellular location is the cytoplasmic vesicle. The protein resides in the secretory vesicle. It is found in the secretory vesicle membrane. The protein localises to the secreted. Member of the granin protein family that regulates the biogenesis of secretory granules. Acts as a sorting receptor for intragranular proteins including chromogranin A/CHGA. May also play a role in angiogenesis. Promotes endothelial proliferation, migration and tube formation through MEK/ERK signaling pathway. The sequence is that of Secretogranin-3 (Scg3) from Rattus norvegicus (Rat).